Consider the following 331-residue polypeptide: Ribonuclease Z (331 aa).

7 residues coordinate Zn(2+): His56, His58, Asp60, His61, His162, Asp235, and His297. The Proton acceptor role is filled by Asp60.

Belongs to the RNase Z family. As to quaternary structure, homodimer. The cofactor is Zn(2+).

It catalyses the reaction Endonucleolytic cleavage of RNA, removing extra 3' nucleotides from tRNA precursor, generating 3' termini of tRNAs. A 3'-hydroxy group is left at the tRNA terminus and a 5'-phosphoryl group is left at the trailer molecule.. Its function is as follows. Zinc phosphodiesterase, which displays some tRNA 3'-processing endonuclease activity. Probably involved in tRNA maturation, by removing a 3'-trailer from precursor tRNA. This Deinococcus radiodurans (strain ATCC 13939 / DSM 20539 / JCM 16871 / CCUG 27074 / LMG 4051 / NBRC 15346 / NCIMB 9279 / VKM B-1422 / R1) protein is Ribonuclease Z (rnz).